The primary structure comprises 87 residues: MLESKLINHIATQFLDGEKDGLDSQTPLFELNIVDSAAIFDLVDFLRQESKVSIGMQEIHPANFATVQSMVALVQRLKAHPEQGGAA.

The region spanning 1–78 (MLESKLINHI…SMVALVQRLK (78 aa)) is the Carrier domain. O-(pantetheine 4'-phosphoryl)serine is present on Ser-36.

It functions in the pathway antibiotic biosynthesis; prodigiosin biosynthesis. In terms of biological role, involved in the biosynthesis of 4-methoxy-2,2'-bipyrrole-5-carbaldehyde (MBC), one of the terminal products involved in the biosynthesis of the red antibiotic prodigiosin (Pig). Carrier of the L-prolyl group transferred from L-prolyl-AMP by PigI. This is Probable acyl carrier protein PigG from Serratia sp. (strain ATCC 39006) (Prodigiosinella confusarubida).